The chain runs to 360 residues: Mitogen-activated protein kinase 14 (360 aa).

An N-acetylserine modification is found at serine 2. Serine 2 carries the phosphoserine modification. A Phosphothreonine modification is found at threonine 16. Residues 24-308 (YQNLSPVGSG…AAQALAHAYF (285 aa)) form the Protein kinase domain. ATP-binding positions include 30–38 (VGSGAYGSV) and lysine 53. Position 53 is an N6-acetyllysine (lysine 53). The active-site Proton acceptor is the aspartate 150. Lysine 152 carries the N6-acetyllysine modification. Threonine 180 is modified (phosphothreonine; by MAP2K3, MAP2K4, MAP2K6 and autocatalysis). Position 182 is a phosphotyrosine; by MAP2K3, MAP2K4, MAP2K6 and autocatalysis (tyrosine 182). Threonine 263 carries the post-translational modification Phosphothreonine. Phosphotyrosine; by ZAP70 is present on tyrosine 323.

The protein belongs to the protein kinase superfamily. CMGC Ser/Thr protein kinase family. MAP kinase subfamily. In terms of assembly, component of a signaling complex containing at least AKAP13, PKN1, MAPK14, ZAK and MAP2K3. Within this complex, AKAP13 interacts directly with PKN1, which in turn recruits MAPK14, MAP2K3 and ZAK. Binds to a kinase interaction motif within the protein tyrosine phosphatase, PTPRR. This interaction retains MAPK14 in the cytoplasm and prevents nuclear accumulation. Interacts with SPAG9 and GADD45A. Interacts with CDC25B, CDC25C, DUSP1, DUSP10, DUSP16, NP60, SUPT20H and TAB1. Interacts with casein kinase II subunits CSNK2A1 and CSNK2B. Interacts with PPM1D. Interacts with CDK5RAP3; recruits PPM1D to MAPK14 and may regulate its dephosphorylation. Interacts with DUSP2; this interaction does not lead to catalytic activation of DUSP2 and dephosphrylation of MAPK14. Mg(2+) is required as a cofactor. Post-translationally, dually phosphorylated on Thr-180 and Tyr-182 by the MAP2Ks MAP2K3/MKK3, MAP2K4/MKK4 and MAP2K6/MKK6 in response to inflammatory cytokines, environmental stress or growth factors, which activates the enzyme. Dual phosphorylation can also be mediated by TAB1-mediated autophosphorylation. TCR engagement in T-cells also leads to Tyr-323 phosphorylation by ZAP70. Dephosphorylated and inactivated by DUPS1, DUSP10 and DUSP16. PPM1D also mediates dephosphorylation and inactivation of MAPK14. Acetylated at Lys-53 and Lys-152 by KAT2B and EP300. Acetylation at Lys-53 increases the affinity for ATP and enhances kinase activity. Lys-53 and Lys-152 are deacetylated by HDAC3. In terms of processing, ubiquitinated. Ubiquitination leads to degradation by the proteasome pathway.

The protein localises to the cytoplasm. The protein resides in the nucleus. It catalyses the reaction L-seryl-[protein] + ATP = O-phospho-L-seryl-[protein] + ADP + H(+). It carries out the reaction L-threonyl-[protein] + ATP = O-phospho-L-threonyl-[protein] + ADP + H(+). With respect to regulation, activated by cell stresses such as DNA damage, heat shock, osmotic shock, anisomycin and sodium arsenite, as well as pro-inflammatory stimuli such as bacterial lipopolysaccharide (LPS) and interleukin-1. Activation occurs through dual phosphorylation of Thr-180 and Tyr-182 by either of two dual specificity kinases, MAP2K3/MKK3 or MAP2K6/MKK6, and potentially also MAP2K4/MKK4, as well as by TAB1-mediated autophosphorylation. MAPK14 phosphorylated on both Thr-180 and Tyr-182 is 10-20-fold more active than MAPK14 phosphorylated only on Thr-180, whereas MAPK14 phosphorylated on Tyr-182 alone is inactive. whereas Thr-180 is necessary for catalysis, Tyr-182 may be required for auto-activation and substrate recognition. Phosphorylated at Tyr-323 by ZAP70 in an alternative activation pathway in response to TCR signaling in T-cells. This alternative pathway is inhibited by GADD45A. Inhibited by dual specificity phosphatases, such as DUSP1, DUSP10, and DUSP16. Specifically inhibited by the binding of pyridinyl-imidazole compounds, which are cytokine-suppressive anti-inflammatory drugs (CSAID). SB203580 is an inhibitor of MAPK14. Serine/threonine kinase which acts as an essential component of the MAP kinase signal transduction pathway. MAPK14 is one of the four p38 MAPKs which play an important role in the cascades of cellular responses evoked by extracellular stimuli such as pro-inflammatory cytokines or physical stress leading to direct activation of transcription factors. Accordingly, p38 MAPKs phosphorylate a broad range of proteins and it has been estimated that they may have approximately 200 to 300 substrates each. Some of the targets are downstream kinases which are activated through phosphorylation and further phosphorylate additional targets. RPS6KA5/MSK1 and RPS6KA4/MSK2 can directly phosphorylate and activate transcription factors such as CREB1, ATF1, the NF-kappa-B isoform RELA/NFKB3, STAT1 and STAT3, but can also phosphorylate histone H3 and the nucleosomal protein HMGN1. RPS6KA5/MSK1 and RPS6KA4/MSK2 play important roles in the rapid induction of immediate-early genes in response to stress or mitogenic stimuli, either by inducing chromatin remodeling or by recruiting the transcription machinery. On the other hand, two other kinase targets, MAPKAPK2/MK2 and MAPKAPK3/MK3, participate in the control of gene expression mostly at the post-transcriptional level, by phosphorylating ZFP36 (tristetraprolin) and ELAVL1, and by regulating EEF2K, which is important for the elongation of mRNA during translation. MKNK1/MNK1 and MKNK2/MNK2, two other kinases activated by p38 MAPKs, regulate protein synthesis by phosphorylating the initiation factor EIF4E2. MAPK14 also interacts with casein kinase II, leading to its activation through autophosphorylation and further phosphorylation of TP53/p53. In the cytoplasm, the p38 MAPK pathway is an important regulator of protein turnover. For example, CFLAR is an inhibitor of TNF-induced apoptosis whose proteasome-mediated degradation is regulated by p38 MAPK phosphorylation. In a similar way, MAPK14 phosphorylates the ubiquitin ligase SIAH2, regulating its activity towards EGLN3. MAPK14 may also inhibit the lysosomal degradation pathway of autophagy by interfering with the intracellular trafficking of the transmembrane protein ATG9. Another function of MAPK14 is to regulate the endocytosis of membrane receptors by different mechanisms that impinge on the small GTPase RAB5A. In addition, clathrin-mediated EGFR internalization induced by inflammatory cytokines and UV irradiation depends on MAPK14-mediated phosphorylation of EGFR itself as well as of RAB5A effectors. Ectodomain shedding of transmembrane proteins is regulated by p38 MAPKs as well. In response to inflammatory stimuli, p38 MAPKs phosphorylate the membrane-associated metalloprotease ADAM17. Such phosphorylation is required for ADAM17-mediated ectodomain shedding of TGF-alpha family ligands, which results in the activation of EGFR signaling and cell proliferation. Another p38 MAPK substrate is FGFR1. FGFR1 can be translocated from the extracellular space into the cytosol and nucleus of target cells, and regulates processes such as rRNA synthesis and cell growth. FGFR1 translocation requires p38 MAPK activation. In the nucleus, many transcription factors are phosphorylated and activated by p38 MAPKs in response to different stimuli. Classical examples include ATF1, ATF2, ATF6, ELK1, PTPRH, DDIT3, TP53/p53 and MEF2C and MEF2A. The p38 MAPKs are emerging as important modulators of gene expression by regulating chromatin modifiers and remodelers. The promoters of several genes involved in the inflammatory response, such as IL6, IL8 and IL12B, display a p38 MAPK-dependent enrichment of histone H3 phosphorylation on 'Ser-10' (H3S10ph) in LPS-stimulated myeloid cells. This phosphorylation enhances the accessibility of the cryptic NF-kappa-B-binding sites marking promoters for increased NF-kappa-B recruitment. Phosphorylates CDC25B and CDC25C which is required for binding to 14-3-3 proteins and leads to initiation of a G2 delay after ultraviolet radiation. Phosphorylates TIAR following DNA damage, releasing TIAR from GADD45A mRNA and preventing mRNA degradation. The p38 MAPKs may also have kinase-independent roles, which are thought to be due to the binding to targets in the absence of phosphorylation. Protein O-Glc-N-acylation catalyzed by the OGT is regulated by MAPK14, and, although OGT does not seem to be phosphorylated by MAPK14, their interaction increases upon MAPK14 activation induced by glucose deprivation. This interaction may regulate OGT activity by recruiting it to specific targets such as neurofilament H, stimulating its O-Glc-N-acylation. Required in mid-fetal development for the growth of embryo-derived blood vessels in the labyrinth layer of the placenta. Also plays an essential role in developmental and stress-induced erythropoiesis, through regulation of EPO gene expression. Phosphorylates S100A9 at 'Thr-113'. In Pan troglodytes (Chimpanzee), this protein is Mitogen-activated protein kinase 14.